The chain runs to 26 residues: Metallothionein (26 aa).

A compositionally biased stretch (low complexity) spans 1-14 (MGDCGCSGASSCNC). A disordered region spans residues 1-26 (MGDCGCSGASSCNCGSGCSCSNCGSK). Residues Cys4, Cys6, Cys12, Cys14, Cys18, Cys20, and Cys23 each coordinate Cu(+). The segment covering 15–26 (GSGCSCSNCGSK) has biased composition (cys residues).

This sequence belongs to the metallothionein superfamily. Type 8 family.

The chain is Metallothionein (cmt) from Neurospora crassa (strain ATCC 24698 / 74-OR23-1A / CBS 708.71 / DSM 1257 / FGSC 987).